A 196-amino-acid polypeptide reads, in one-letter code: Probable signal peptidase I-1 (196 aa).

Residues 1–16 are Cytoplasmic-facing; the sequence is MQNSPIPSPWQFIKEN. The chain crosses the membrane as a helical span at residues 17 to 35; sequence IPLLMVALVLALLLRFFVA. Residues 36 to 196 are Periplasmic-facing; it reads EPRYIPSDSM…FVPARTIINT (161 aa). Residues serine 44 and lysine 94 contribute to the active site.

This sequence belongs to the peptidase S26 family.

It localises to the cell membrane. The catalysed reaction is Cleavage of hydrophobic, N-terminal signal or leader sequences from secreted and periplasmic proteins.. The protein is Probable signal peptidase I-1 (lepB1) of Synechocystis sp. (strain ATCC 27184 / PCC 6803 / Kazusa).